The primary structure comprises 164 residues: Vasopressin-neurophysin 2-copeptin (164 aa).

Positions 1–19 (MPDTMLPACFLGLLAFSSA) are cleaved as a signal peptide. A disulfide bridge links Cys-20 with Cys-25. At Gly-28 the chain carries Glycine amide. Intrachain disulfides connect Cys-41/Cys-85, Cys-44/Cys-58, Cys-52/Cys-75, Cys-59/Cys-65, Cys-92/Cys-104, Cys-98/Cys-116, and Cys-105/Cys-110. Asn-131 is a glycosylation site (N-linked (GlcNAc...) asparagine).

It belongs to the vasopressin/oxytocin family. As to quaternary structure, interacts with vasopressin receptors V1bR/AVPR1B (Ki=85 pM), V1aR/AVPR1A (Ki=0.6 nM) and V2R/AVPR2 (Ki=4.9 nM). Interacts with oxytocin receptor (OXTR) (Ki=110 nM). In terms of assembly, (Microbial infection) May interact with SARS coronavirus-2/SARS-CoV-2; they may form a complex with secreted ACE2.

The protein resides in the secreted. In terms of biological role, specifically binds vasopressin. Has a direct antidiuretic action on the kidney, it also causes vasoconstriction of the peripheral vessels. Acts by binding to vasopressin receptors (V1bR/AVPR1B, V1aR/AVPR1A, and V2R/AVPR2). This chain is Vasopressin-neurophysin 2-copeptin (AVP), found in Homo sapiens (Human).